We begin with the raw amino-acid sequence, 326 residues long: tRNA-modifying protein YgfZ (326 aa).

W27 and W189 together coordinate folate.

The protein belongs to the tRNA-modifying YgfZ family.

The protein resides in the cytoplasm. Folate-binding protein involved in regulating the level of ATP-DnaA and in the modification of some tRNAs. It is probably a key factor in regulatory networks that act via tRNA modification, such as initiation of chromosomal replication. The polypeptide is tRNA-modifying protein YgfZ (Escherichia coli (strain SMS-3-5 / SECEC)).